The following is a 527-amino-acid chain: Transcription initiation factor TFIID subunit 6b (527 aa).

The region spanning 3–99 is the Histone-fold domain; that stretch reads TKESIEVIAQ…NLEPTSGSKS (97 aa). 2 disordered regions span residues 410–442 and 462–492; these read SPPTSSVWKTNGKLTSPRQSKRKASSDNLTHQP and MRGTTTVPQQSHTDADARHHNSPSTIAPKTS. 2 stretches are compositionally biased toward polar residues: residues 416 to 427 and 462 to 473; these read VWKTNGKLTSPR and MRGTTTVPQQSH.

It belongs to the TAF6 family. As to quaternary structure, component of the TFIID complex. TFIID is composed of TATA binding protein (TBP) and a number of TBP-associated factors (TAFs) whose MWs range from 14-217 kDa. Interacts with TAF5 and TAF9. As to expression, expressed in roots, leaves, inflorescences and siliques.

It is found in the nucleus. Functionally, TAFs are components of the transcription factor IID (TFIID) complex that is essential for mediating regulation of RNA polymerase transcription. Not redundant with TAF6. In Arabidopsis thaliana (Mouse-ear cress), this protein is Transcription initiation factor TFIID subunit 6b (TAF6B).